We begin with the raw amino-acid sequence, 560 residues long: Formate--tetrahydrofolate ligase (560 aa).

Residue 69–76 (TPAGEGKS) participates in ATP binding.

The protein belongs to the formate--tetrahydrofolate ligase family.

The catalysed reaction is (6S)-5,6,7,8-tetrahydrofolate + formate + ATP = (6R)-10-formyltetrahydrofolate + ADP + phosphate. It functions in the pathway one-carbon metabolism; tetrahydrofolate interconversion. In Listeria monocytogenes serotype 4a (strain HCC23), this protein is Formate--tetrahydrofolate ligase.